A 359-amino-acid polypeptide reads, in one-letter code: 3-dehydroquinate synthase (359 aa).

NAD(+) contacts are provided by residues 70 to 75 (DGEQYK), 105 to 109 (GVIGD), 129 to 130 (TT), K142, K151, and 169 to 172 (FYKT). 3 residues coordinate Zn(2+): E184, H247, and H264.

The protein belongs to the sugar phosphate cyclases superfamily. Dehydroquinate synthase family. Co(2+) serves as cofactor. The cofactor is Zn(2+). NAD(+) is required as a cofactor.

The protein resides in the cytoplasm. The enzyme catalyses 7-phospho-2-dehydro-3-deoxy-D-arabino-heptonate = 3-dehydroquinate + phosphate. Its pathway is metabolic intermediate biosynthesis; chorismate biosynthesis; chorismate from D-erythrose 4-phosphate and phosphoenolpyruvate: step 2/7. Catalyzes the conversion of 3-deoxy-D-arabino-heptulosonate 7-phosphate (DAHP) to dehydroquinate (DHQ). This chain is 3-dehydroquinate synthase, found in Francisella tularensis subsp. holarctica (strain FTNF002-00 / FTA).